We begin with the raw amino-acid sequence, 628 residues long: Leucine-rich repeat and fibronectin type-III domain-containing protein 3 (628 aa).

Positions 1-16 (MAVLPLLLCLLPLAPA) are cleaved as a signal peptide. The Extracellular portion of the chain corresponds to 17–540 (SSPSQPATPS…APHAPFLGGT (524 aa)). Positions 19–59 (PSQPATPSPCPRRCRCQTQSLPLSVLCPGAGLLFVPPSLDR) constitute an LRRNT domain. LRR repeat units follow at residues 84-105 (GLLHLSLSRNTIRHVAAGAFAD), 108-129 (ALRALHLDGNRLTSLGEGQLRG), 132-153 (NLRHLILSNNQLAALAAGALDD), 157-178 (TLEDLDLSYNNLEQLPWEALGR), 181-202 (NVNTLGLDHNLLASVPAGAFSR), and 205-226 (KLARLDMTSNRLTTIPPDPLFS). Residues 249 to 295 (NPLHCNCELVWLRRLAREDDLEACASPPALGGRYFWAVGEEEFVCEP) form the LRRCT domain. One can recognise an Ig-like domain in the interval 295 to 382 (PPVVTHRSPP…GEATAAVELT (88 aa)). C317 and C366 form a disulfide bridge. 2 N-linked (GlcNAc...) asparagine glycosylation sites follow: N348 and N393. A disordered region spans residues 380 to 432 (ELTVGPPPPPQLANSTSCDPPRDGDPDALTPPSAASASAAAKAADTGPPTDRG). A compositionally biased stretch (low complexity) spans 406 to 429 (DALTPPSAASASAAAKAADTGPPT). The 99-residue stretch at 427–525 (PPTDRGVQVT…GCARFSTEPA (99 aa)) folds into the Fibronectin type-III domain. Residues 541–561 (MIIALGGVIVASVLVFIFVLL) form a helical membrane-spanning segment. The Cytoplasmic portion of the chain corresponds to 562 to 628 (MRYKVHGGQP…WRPSHEPTGP (67 aa)). The segment at 587-628 (QTNGSLGPTPAPPAPEPAAPRAHTVVQLDCEPWRPSHEPTGP) is disordered. A compositionally biased stretch (pro residues) spans 595 to 604 (TPAPPAPEPA). Positions 617–628 (EPWRPSHEPTGP) are enriched in basic and acidic residues.

Belongs to the LRFN family. Can form heteromeric complexes with LRFN1, LRFN2, LRFN4 and LRFN5. Able to form homomeric complexes across cell junctions, between adjacent cells. Does not interact with DLG4. N-glycosylated.

It localises to the cell membrane. It is found in the cell projection. Its subcellular location is the axon. The protein resides in the dendrite. The protein localises to the synapse. It localises to the presynaptic cell membrane. It is found in the postsynaptic cell membrane. Functionally, cell adhesion molecule that mediates homophilic cell-cell adhesion in a Ca(2+)-independent manner. Promotes neurite outgrowth in hippocampal neurons. This Ailuropoda melanoleuca (Giant panda) protein is Leucine-rich repeat and fibronectin type-III domain-containing protein 3 (LRFN3).